Reading from the N-terminus, the 251-residue chain is MTEAQRHQILLDMLAQLGFVTVENVIERLGISPATARRDINKLDESGKLKKVRNGAEAITQQRPRWTPMNLHQAQNHDEKVRIAKAASQLVNPGESVVINCGSTAFLLGREMCGKPVQIITNYLPLANYLIDQEHESVIIMGGQYNKSQSITLSPQGSENSLYAGHWMFTSGKGLTADGLYKTDMLTAMAEQKMLSVVGKLVALVDSSKIGERAGMLFSRADQIDMLITGKNANPEVLQQLEAQGVSILRV.

The region spanning 3–58 (EAQRHQILLDMLAQLGFVTVENVIERLGISPATARRDINKLDESGKLKKVRNGAEA) is the HTH deoR-type domain. Positions 20–39 (VTVENVIERLGISPATARRD) form a DNA-binding region, H-T-H motif.

Its subcellular location is the cytoplasm. In terms of biological role, represses ulaG and the ulaABCDEF operon. The polypeptide is HTH-type transcriptional regulator UlaR (Salmonella arizonae (strain ATCC BAA-731 / CDC346-86 / RSK2980)).